A 121-amino-acid polypeptide reads, in one-letter code: Autophagy-related protein 8f (121 aa).

Gly-117 carries the Phosphatidylethanolamine amidated glycine lipid modification. Residues 118-121 constitute a propeptide, removed in mature form; it reads FGSP.

The protein belongs to the ATG8 family. As to quaternary structure, interacts with ATG4. Interacts with NBR1. Interacts with ATI1 and ATI2. Interacts with SH3P2. Post-translationally, the C-terminal 4 residues are removed by ATG4 to expose Gly-117 at the C-terminus. This Gly-117 forms then a thioester bond with the 'Cys-558' of ATG7 (E1-like activating enzyme) before being transferred to the 'Cys-258' of ATG3 (the specific E2 conjugating enzyme), in order to be finally amidated with phosphatidylethanolamine. This lipid modification anchors ATG8 to autophagosomes. Constitutively expressed.

The protein resides in the cytoplasmic vesicle. It localises to the autophagosome membrane. It is found in the vacuole membrane. The protein localises to the cytoplasm. Its subcellular location is the cytoskeleton. Its function is as follows. Ubiquitin-like modifier involved in autophagosomes formation. May mediate the delivery of the autophagosomes to the vacuole via the microtubule cytoskeleton. The polypeptide is Autophagy-related protein 8f (ATG8F) (Arabidopsis thaliana (Mouse-ear cress)).